The primary structure comprises 867 residues: KH domain-containing protein akap-1 (867 aa).

The helical transmembrane segment at 108-128 (HALLIALGGFSIAALFVWYIN) threads the bilayer. Disordered regions lie at residues 145-458 (SNGL…QKRV) and 481-523 (HENA…GLTT). Positions 152 to 162 (ATASDVQTENG) are enriched in polar residues. Composition is skewed to basic and acidic residues over residues 186–211 (QQKDEDEKTQKKDAVQNEKPSIDKKQ), 218–239 (TEKKEEKTVEIHTETEETDHVA), 247–275 (SEHKEHDKKTKQKNDEPVSIDKKSEEIEV), and 298–307 (QFVKKEEPKL). Positions 336–345 (TKMNDATSPL) are enriched in polar residues. Over residues 363 to 383 (EMEKSFNEEEFRLNESSDIDR) the composition is skewed to basic and acidic residues. Residues 397–408 (NKNRSSQKRKGG) show a composition bias toward basic residues. Composition is skewed to basic and acidic residues over residues 441–458 (LTKEKSVEETPEKSQKRV) and 481–490 (HENASYEKSD). Residues 494-507 (LDSQNSEASSQDSG) are compositionally biased toward polar residues. Positions 528-595 (LPMYEFEIPN…DEINHCLQML (68 aa)) constitute a KH domain. Positions 689-747 (PCQNGLLCAAPVGNAWFRAVTVQYFDETDEVFVKFVDYGGYSKMARQDLRQIRTDLMSL) constitute a Tudor domain.

The protein resides in the membrane. This Caenorhabditis elegans protein is KH domain-containing protein akap-1.